We begin with the raw amino-acid sequence, 144 residues long: Peroxisomal membrane protein PEX34 (144 aa).

A run of 3 helical transmembrane segments spans residues 18–30, 52–73, and 109–131; these read NIWS…LDFF, VWLC…KLCK, and TAAL…RLFK.

Homooligomer. Interacts with PEX11, PEX25 and PEX27.

It localises to the peroxisome membrane. Functionally, in concert with the three peroxisome divisional factors, PEX11, PEX25 and PEX27, controls peroxisome morphology and abundance under conditions of peroxisome proliferation. Maintains mature peroxisomes in actively dividing cells. The chain is Peroxisomal membrane protein PEX34 (PEX34) from Saccharomyces cerevisiae (strain ATCC 204508 / S288c) (Baker's yeast).